A 292-amino-acid polypeptide reads, in one-letter code: Chronophin (292 aa).

Catalysis depends on Asp-25, which acts as the Nucleophile. 2 residues coordinate Mg(2+): Asp-25 and Asp-27. The Proton donor role is filled by Asp-27. Substrate contacts are provided by residues 58–60 (SNN), His-178, and Lys-209. Asp-234 lines the Mg(2+) pocket.

Belongs to the HAD-like hydrolase superfamily. In terms of assembly, homodimer. Mg(2+) serves as cofactor. Ubiquitous. highly expressed in brain (at protein level).

Its subcellular location is the cytoplasm. It localises to the cytosol. The protein resides in the cytoskeleton. It is found in the cell projection. The protein localises to the ruffle membrane. Its subcellular location is the lamellipodium membrane. It localises to the cell membrane. It carries out the reaction pyridoxal 5'-phosphate + H2O = pyridoxal + phosphate. It catalyses the reaction pyridoxine 5'-phosphate + H2O = pyridoxine + phosphate. The catalysed reaction is pyridoxamine + phosphate = pyridoxamine 5'-phosphate + H2O. The enzyme catalyses O-phospho-L-seryl-[protein] + H2O = L-seryl-[protein] + phosphate. Inhibited by beryllium trifluoride. Functions as a pyridoxal phosphate (PLP) phosphatase, which also catalyzes the dephosphorylation of pyridoxine 5'-phosphate (PNP) and pyridoxamine 5'-phosphate (PMP), with order of substrate preference PLP &gt; PNP &gt; PMP and therefore plays a role in vitamin B6 metabolism. Also functions as a protein serine phosphatase that specifically dephosphorylates 'Ser-3' in proteins of the actin-depolymerizing factor (ADF)/cofilin family like CFL1 and DSTN. Thereby, regulates cofilin-dependent actin cytoskeleton reorganization, being required for normal progress through mitosis and normal cytokinesis. Does not dephosphorylate phosphothreonines in LIMK1. Does not dephosphorylate peptides containing phosphotyrosine. This Mus musculus (Mouse) protein is Chronophin.